A 616-amino-acid chain; its full sequence is Chaperone protein HscA (616 aa).

The protein belongs to the heat shock protein 70 family.

Its function is as follows. Chaperone involved in the maturation of iron-sulfur cluster-containing proteins. Has a low intrinsic ATPase activity which is markedly stimulated by HscB. Involved in the maturation of IscU. This is Chaperone protein HscA from Pectobacterium atrosepticum (strain SCRI 1043 / ATCC BAA-672) (Erwinia carotovora subsp. atroseptica).